The following is a 98-amino-acid chain: Citrate lyase acyl carrier protein (98 aa).

Serine 14 carries the post-translational modification O-(phosphoribosyl dephospho-coenzyme A)serine.

It belongs to the CitD family. Oligomer with a subunit composition of (alpha,beta,gamma)6.

It is found in the cytoplasm. Its function is as follows. Covalent carrier of the coenzyme of citrate lyase. The sequence is that of Citrate lyase acyl carrier protein from Salmonella arizonae (strain ATCC BAA-731 / CDC346-86 / RSK2980).